We begin with the raw amino-acid sequence, 458 residues long: ATP synthase subunit beta (458 aa).

Residue 148-155 participates in ATP binding; that stretch reads GGAGVGKT.

The protein belongs to the ATPase alpha/beta chains family. As to quaternary structure, F-type ATPases have 2 components, CF(1) - the catalytic core - and CF(0) - the membrane proton channel. CF(1) has five subunits: alpha(3), beta(3), gamma(1), delta(1), epsilon(1). CF(0) has three main subunits: a(1), b(2) and c(9-12). The alpha and beta chains form an alternating ring which encloses part of the gamma chain. CF(1) is attached to CF(0) by a central stalk formed by the gamma and epsilon chains, while a peripheral stalk is formed by the delta and b chains.

The protein localises to the cell inner membrane. The enzyme catalyses ATP + H2O + 4 H(+)(in) = ADP + phosphate + 5 H(+)(out). Functionally, produces ATP from ADP in the presence of a proton gradient across the membrane. The catalytic sites are hosted primarily by the beta subunits. The protein is ATP synthase subunit beta of Pseudomonas putida (strain ATCC 700007 / DSM 6899 / JCM 31910 / BCRC 17059 / LMG 24140 / F1).